The primary structure comprises 1282 residues: Indigoidine synthase (1282 aa).

The tract at residues 24–379 is adenylation; it reads AQRVAEHPEA…GGIQLARGYL (356 aa). Positions 937 to 1012 constitute a Carrier domain; that stretch reads APRTETEKEI…KLARRLEREV (76 aa). Ser-972 is modified (O-(pantetheine 4'-phosphoryl)serine). Residues 1030–1138 are thioesterase; the sequence is RPVICWPGLG…APGSPKVRAE (109 aa).

This sequence belongs to the ATP-dependent AMP-binding enzyme family. The cofactor is pantetheine 4'-phosphate.

The catalysed reaction is 2 FMN + 2 L-glutamine + 2 ATP + O2 = indigoidine + 2 FMNH2 + 2 AMP + 2 diphosphate + 2 H2O. It catalyses the reaction FMN + L-glutamine + ATP = 3-amino-1,5-dihydropyridine-2,6-dione + FMNH2 + AMP + diphosphate. It carries out the reaction 2 3-amino-1,5-dihydropyridine-2,6-dione + O2 = indigoidine + 2 H2O. Its pathway is pigment biosynthesis. In terms of biological role, nonribosomal peptide synthetase involved in the biosynthesis of the blue pigment indigoidine. Catalyzes the synthesis of the blue pigment using L-Gln as a substrate. Two glutamine molecules are cyclized and oxidized to form indigoidine. The protein is Indigoidine synthase of Streptomyces lavendulae.